The chain runs to 685 residues: Allergen Cr-PI (685 aa).

An N-terminal signal peptide occupies residues 1-16; the sequence is MKTALVFAAVVAFVAA. N-linked (GlcNAc...) asparagine glycosylation is present at Asn233.

The protein belongs to the hemocyanin family.

The protein localises to the secreted. The protein resides in the extracellular space. Larval storage protein (LSP) which may serve as a store of amino acids for synthesis of adult proteins. This is Allergen Cr-PI from Periplaneta americana (American cockroach).